We begin with the raw amino-acid sequence, 288 residues long: Undecaprenyl-diphosphatase (288 aa).

The next 8 membrane-spanning stretches (helical) occupy residues 25–45 (GITE…NEFL), 53–73 (FIDM…MVIY), 93–113 (WKLW…GLLL), 121–141 (LSNF…FIWI), 171–191 (VLSI…GIIV), 196–216 (SVAA…YSGL), 231–251 (GQAA…LFVI), and 263–283 (FTVF…YGAV).

This sequence belongs to the UppP family.

Its subcellular location is the cell membrane. It catalyses the reaction di-trans,octa-cis-undecaprenyl diphosphate + H2O = di-trans,octa-cis-undecaprenyl phosphate + phosphate + H(+). Catalyzes the dephosphorylation of undecaprenyl diphosphate (UPP). Confers resistance to bacitracin. This is Undecaprenyl-diphosphatase from Streptococcus thermophilus (strain CNRZ 1066).